We begin with the raw amino-acid sequence, 345 residues long: tRNA dimethylallyltransferase (345 aa).

9-16 (GPTASGKS) contacts ATP. A substrate-binding site is contributed by 11-16 (TASGKS). Interaction with substrate tRNA stretches follow at residues 34–37 (DSMQ) and 195–199 (QRMIR).

It belongs to the IPP transferase family. Monomer. It depends on Mg(2+) as a cofactor.

The catalysed reaction is adenosine(37) in tRNA + dimethylallyl diphosphate = N(6)-dimethylallyladenosine(37) in tRNA + diphosphate. In terms of biological role, catalyzes the transfer of a dimethylallyl group onto the adenine at position 37 in tRNAs that read codons beginning with uridine, leading to the formation of N6-(dimethylallyl)adenosine (i(6)A). In Orientia tsutsugamushi (strain Boryong) (Rickettsia tsutsugamushi), this protein is tRNA dimethylallyltransferase.